Reading from the N-terminus, the 149-residue chain is Large ribosomal subunit protein uL15 (149 aa).

2 stretches are compositionally biased toward basic residues: residues 1 to 13 (MPTR…KHRG) and 21 to 42 (RIGK…HHHR). Residues 1–44 (MPTRLTKTRKHRGNVSAGKGRIGKHRKHPGGRGKAGGQHHHRTN) are disordered.

This sequence belongs to the universal ribosomal protein uL15 family. As to quaternary structure, component of the large ribosomal subunit. Mature ribosomes consist of a small (40S) and a large (60S) subunit. The 40S subunit contains about 32 different proteins and 1 molecule of RNA (18S). The 60S subunit contains 45 different proteins and 3 molecules of RNA (25S, 5.8S and 5S).

It is found in the cytoplasm. Its function is as follows. Component of the ribosome, a large ribonucleoprotein complex responsible for the synthesis of proteins in the cell. The small ribosomal subunit (SSU) binds messenger RNAs (mRNAs) and translates the encoded message by selecting cognate aminoacyl-transfer RNA (tRNA) molecules. The large subunit (LSU) contains the ribosomal catalytic site termed the peptidyl transferase center (PTC), which catalyzes the formation of peptide bonds, thereby polymerizing the amino acids delivered by tRNAs into a polypeptide chain. The nascent polypeptides leave the ribosome through a tunnel in the LSU and interact with protein factors that function in enzymatic processing, targeting, and the membrane insertion of nascent chains at the exit of the ribosomal tunnel. The sequence is that of Large ribosomal subunit protein uL15 from Candida albicans (strain SC5314 / ATCC MYA-2876) (Yeast).